The sequence spans 2049 residues: Polyunsaturated fatty acid synthase subunit B (2049 aa).

2 consecutive Ketosynthase family 3 (KS3) domains span residues 15-442 and 468-908; these read EKRI…VFEE and NMRI…LLSD. Catalysis depends on for beta-ketoacyl synthase 1 activity residues C196, H333, and H368. Residues 467–984 are chain length factor (CLF) domain; sequence NNMRIAITGM…LGETLAQEAD (518 aa). Positions 1044–1377 are acyltransferase (AT) domain; sequence RVAFMYGEGR…QRSHVTGAMD (334 aa). The disordered stretch occupies residues 1500–1531; the sequence is NKDNQPAVAPAATAAPTPKPKPAASSGKPVPS. A compositionally biased stretch (low complexity) spans 1505-1531; the sequence is PAVAPAATAAPTPKPKPAASSGKPVPS. The enoyl reductase (ER) domain stretch occupies residues 1579–1887; it reads SRAFMKTYGV…SRANKLYELF (309 aa).

As to quaternary structure, component of the polyunsaturated fatty acid synthase complex composed of at least ORF-A, ORF-B and ORF-C.

The protein operates within lipid metabolism; fatty acid biosynthesis. In terms of biological role, poliketide synthase-like protein; part of the polyunsaturated fatty acid synthase composed of the 3 PKS-like subunits A, B and C. While the saturated fatty acids (SFAs) in Thraustochytrium are produced by the conventional fatty acid synthase (FAS) pathway, polyunsaturated fatty acids (PUFAs) including docosahexeanoic acid (DHA) and docosapentaenoic acid (DPA) are synthesized via an anaerobical PKS pathway. PUFA synthase assimilates fatty acyl-CoA, the product of FAS, as the starter unit to synthesize DPA, and this starter unit may be butyryl-CoA, hexanoyl-CoA, or octanoyl-CoA. DPA and DHA biosynthesis seem to differ by the reduction at the N-3 position by PUFA synthase, not the extension of carbon chain. In DHA biosynthesis, PUFA synthase extends the fatty acyl chain from the methyl toward the carboxyl end, and the double bond is formed when the carbon chain is growing, instead of afterward. Therefore, PUFA synthase is unable to transform DPA to DHA, suggesting that DPA is not the precursor of DHA. Moreover, DPA molecule is partly extended by FAS KS domain, so DPA biosynthesis is less dependent on PUFA synthase KS domain than DHA. The chain is Polyunsaturated fatty acid synthase subunit B from Thraustochytrium sp. (strain ATCC 26185 / S-3).